A 353-amino-acid chain; its full sequence is Photosystem II D2 protein (353 aa).

Thr2 is modified (N-acetylthreonine). Position 2 is a phosphothreonine (Thr2). The helical transmembrane segment at Cys41–Thr61 threads the bilayer. His118 is a binding site for chlorophyll a. A helical transmembrane segment spans residues Gly125 to Pro141. Residues Gln130 and Asn143 each coordinate pheophytin a. A helical membrane pass occupies residues Val153–Ser166. His198 contributes to the chlorophyll a binding site. A helical membrane pass occupies residues Ala208 to Asp228. Positions 215 and 262 each coordinate a plastoquinone. His215 contacts Fe cation. His269 lines the Fe cation pocket. A helical membrane pass occupies residues Gly279–Arg295.

Belongs to the reaction center PufL/M/PsbA/D family. PSII is composed of 1 copy each of membrane proteins PsbA, PsbB, PsbC, PsbD, PsbE, PsbF, PsbH, PsbI, PsbJ, PsbK, PsbL, PsbM, PsbT, PsbX, PsbY, PsbZ, Psb30/Ycf12, at least 3 peripheral proteins of the oxygen-evolving complex and a large number of cofactors. It forms dimeric complexes. It depends on The D1/D2 heterodimer binds P680, chlorophylls that are the primary electron donor of PSII, and subsequent electron acceptors. It shares a non-heme iron and each subunit binds pheophytin, quinone, additional chlorophylls, carotenoids and lipids. There is also a Cl(-1) ion associated with D1 and D2, which is required for oxygen evolution. The PSII complex binds additional chlorophylls, carotenoids and specific lipids. as a cofactor.

It localises to the plastid. It is found in the chloroplast thylakoid membrane. The catalysed reaction is 2 a plastoquinone + 4 hnu + 2 H2O = 2 a plastoquinol + O2. In terms of biological role, photosystem II (PSII) is a light-driven water:plastoquinone oxidoreductase that uses light energy to abstract electrons from H(2)O, generating O(2) and a proton gradient subsequently used for ATP formation. It consists of a core antenna complex that captures photons, and an electron transfer chain that converts photonic excitation into a charge separation. The D1/D2 (PsbA/PsbD) reaction center heterodimer binds P680, the primary electron donor of PSII as well as several subsequent electron acceptors. D2 is needed for assembly of a stable PSII complex. The polypeptide is Photosystem II D2 protein (Amborella trichopoda).